Consider the following 1147-residue polypeptide: Lon protease homolog 2, peroxisomal (1147 aa).

The 329-residue stretch at 20–348 (LPTYKLDSNL…EVNRMLESMI (329 aa)) folds into the Lon N-terminal domain. 2 disordered regions span residues 395–444 (KPDK…DDDD) and 561–626 (KIES…SLTT). Residues 427-444 (DGNESNDEYDDDEDDDDD) show a composition bias toward acidic residues. Basic and acidic residues-rich tracts occupy residues 561-574 (KIESENSKKSKKNE) and 582-597 (KNDKQRSEKTFTRSDD). Residue 651 to 658 (GPPGTGKT) participates in ATP binding. Residues 903-1131 (SAKCGVVNGL…WDVIKAVWGD (229 aa)) form the Lon proteolytic domain. Residues serine 1006 and lysine 1049 contribute to the active site.

The protein belongs to the peptidase S16 family.

It is found in the peroxisome matrix. It catalyses the reaction Hydrolysis of proteins in presence of ATP.. ATP-dependent serine protease that mediates the selective degradation of misfolded and unassembled polypeptides in the peroxisomal matrix. Necessary for type 2 peroxisome targeting signal (PTS2)-containing protein processing and facilitates peroxisome matrix protein import. This chain is Lon protease homolog 2, peroxisomal, found in Debaryomyces hansenii (strain ATCC 36239 / CBS 767 / BCRC 21394 / JCM 1990 / NBRC 0083 / IGC 2968) (Yeast).